The chain runs to 126 residues: Large ribosomal subunit protein bL12 (126 aa).

Belongs to the bacterial ribosomal protein bL12 family. Homodimer. Part of the ribosomal stalk of the 50S ribosomal subunit. Forms a multimeric L10(L12)X complex, where L10 forms an elongated spine to which 2 to 4 L12 dimers bind in a sequential fashion. Binds GTP-bound translation factors.

Its function is as follows. Forms part of the ribosomal stalk which helps the ribosome interact with GTP-bound translation factors. Is thus essential for accurate translation. The chain is Large ribosomal subunit protein bL12 from Solibacter usitatus (strain Ellin6076).